We begin with the raw amino-acid sequence, 470 residues long: Glucose-1-phosphate adenylyltransferase (470 aa).

Alpha-D-glucose 1-phosphate is bound by residues Gly-165, 182 to 183, and Ser-200; that span reads EK.

Belongs to the bacterial/plant glucose-1-phosphate adenylyltransferase family. As to quaternary structure, homotetramer.

The catalysed reaction is alpha-D-glucose 1-phosphate + ATP + H(+) = ADP-alpha-D-glucose + diphosphate. It functions in the pathway glycan biosynthesis; glycogen biosynthesis. Its function is as follows. Involved in the biosynthesis of ADP-glucose, a building block required for the elongation reactions to produce glycogen. Catalyzes the reaction between ATP and alpha-D-glucose 1-phosphate (G1P) to produce pyrophosphate and ADP-Glc. This is Glucose-1-phosphate adenylyltransferase from Paenarthrobacter aurescens (strain TC1).